Reading from the N-terminus, the 312-residue chain is Protoheme IX farnesyltransferase (312 aa).

Transmembrane regions (helical) follow at residues 29-49 (VMSL…GHMN), 50-70 (PVLA…SGAL), 90-110 (IPAG…LSAF), 117-137 (LMVN…YAVI), 150-170 (IVIG…AATG), 177-197 (LVLF…LSLF), 223-243 (ALFY…MGFA), 246-266 (FYGV…WRLW), and 292-312 (IFAV…FGVF).

The protein belongs to the UbiA prenyltransferase family. Protoheme IX farnesyltransferase subfamily.

It is found in the cell inner membrane. The catalysed reaction is heme b + (2E,6E)-farnesyl diphosphate + H2O = Fe(II)-heme o + diphosphate. It functions in the pathway porphyrin-containing compound metabolism; heme O biosynthesis; heme O from protoheme: step 1/1. Its function is as follows. Converts heme B (protoheme IX) to heme O by substitution of the vinyl group on carbon 2 of heme B porphyrin ring with a hydroxyethyl farnesyl side group. In Brucella melitensis biotype 1 (strain ATCC 23456 / CCUG 17765 / NCTC 10094 / 16M), this protein is Protoheme IX farnesyltransferase.